The chain runs to 457 residues: Glycine receptor subunit alpha-1 (457 aa).

Residues 1–28 (MYSFNTLRLYLWETIVFFSLAASKEAEA) form the signal peptide. At 29–250 (ARSAPKPMSP…RFHLERQMGY (222 aa)) the chain is on the extracellular side. Residue Asn-66 is glycosylated (N-linked (GlcNAc...) asparagine). Positions 93 and 157 each coordinate glycine. Cysteines 166 and 180 form a disulfide. Zn(2+)-binding residues include Glu-220 and Asp-222. Cys-226 and Cys-237 are oxidised to a cystine. A strychnine-binding site is contributed by 230–235 (YNTGKF). Thr-232 provides a ligand contact to glycine. His-243 contributes to the Zn(2+) binding site. A helical transmembrane segment spans residues 251-272 (YLIQMYIPSLLIVILSWISFWI). Topologically, residues 273-277 (NMDAA) are cytoplasmic. The helical transmembrane segment at 278–298 (PARVGLGITTVLTMTTQSSGS) threads the bilayer. Residues 299–309 (RASLPKVSYVK) lie on the Extracellular side of the membrane. A helical transmembrane segment spans residues 310–330 (AIDIWMAVCLLFVFSALLEYA). Residues 331-425 (AVNFVSRQHK…FIQRAKKIDK (95 aa)) lie on the Cytoplasmic side of the membrane. A disordered region spans residues 391-410 (KGANNSNTTNPPPAPSKSPE). Residues 426 to 446 (ISRIGFPMAFLIFNMFYWIIY) traverse the membrane as a helical segment. The Extracellular portion of the chain corresponds to 447-457 (KIVRREDVHNQ).

This sequence belongs to the ligand-gated ion channel (TC 1.A.9) family. Glycine receptor (TC 1.A.9.3) subfamily. GLRA1 sub-subfamily. As to quaternary structure, interacts with GLRB to form heteropentameric channels; this is probably the predominant form in vivo. Heteropentamer composed of four GLRA1 subunits and one GLRB subunit. Heteropentamer composed of two GLRA1 and three GLRB. Heteropentamer composed of three GLRA1 and two GLRB. Homopentamer (in vitro). Both homopentamers and heteropentamers form functional ion channels, but their characteristics are subtly different.

The protein resides in the postsynaptic cell membrane. The protein localises to the synapse. It is found in the perikaryon. Its subcellular location is the cell projection. It localises to the dendrite. The protein resides in the cell membrane. The enzyme catalyses chloride(in) = chloride(out). Channel opening is triggered by extracellular glycine. Channel characteristics depend on the subunit composition; heteropentameric channels are activated by lower glycine levels and display faster desensitization. Channel opening is also triggered by taurine and beta-alanine. Channel activity is potentiated by nanomolar concentrations of Zn(2+); half-maximal activation is observed with 37 nM Zn(2+). Inhibited by higher Zn(2+) levels; haf-maximal inhibition occurs at 20 uM Zn(2+). Inhibited by strychnine. Strychnine binding locks the channel in a closed conformation and prevents channel opening in response to extracellular glycine. Inhibited by lindane. Inhibited by picrotoxin. Functionally, subunit of heteromeric glycine-gated chloride channels. Plays an important role in the down-regulation of neuronal excitability. Contributes to the generation of inhibitory postsynaptic currents. Channel activity is potentiated by ethanol. Potentiation of channel activity by intoxicating levels of ethanol contribute to the sedative effects of ethanol. This chain is Glycine receptor subunit alpha-1 (GLRA1), found in Homo sapiens (Human).